A 455-amino-acid polypeptide reads, in one-letter code: 3-phosphoshikimate 1-carboxyvinyltransferase (455 aa).

Positions 1 to 19 (MSHGASSRPATARKSSGLS) are enriched in polar residues. A disordered region spans residues 1 to 25 (MSHGASSRPATARKSSGLSGTVRIP). Position 28 (K28) interacts with phosphoenolpyruvate. 2 residues coordinate 3-phosphoshikimate: S29 and R33. R128 is a binding site for phosphoenolpyruvate. 3-phosphoshikimate contacts are provided by S173, A174, Q175, D326, and K353. Q175 serves as a coordination point for phosphoenolpyruvate. D326 acts as the Proton acceptor in catalysis. R357 and R405 together coordinate phosphoenolpyruvate.

It belongs to the EPSP synthase family. As to quaternary structure, monomer.

Its subcellular location is the cytoplasm. The catalysed reaction is 3-phosphoshikimate + phosphoenolpyruvate = 5-O-(1-carboxyvinyl)-3-phosphoshikimate + phosphate. It functions in the pathway metabolic intermediate biosynthesis; chorismate biosynthesis; chorismate from D-erythrose 4-phosphate and phosphoenolpyruvate: step 6/7. Is resistant to inhibition by glyphosate (glyphosate-tolerant) like other members of class II EPSPS, in contrast to class I EPSPS, which is glyphosate-sensitive. Is much less sensitive to inhibition by the (R)-difluoromethyl and (R)-phosphonate analogs of the tetrahedral reaction intermediate than the representative class I EPSPS from E.coli. Is highly activated in the presence of cations, such as NH4(+), Rb(+), and K(+). Its function is as follows. Catalyzes the transfer of the enolpyruvyl moiety of phosphoenolpyruvate (PEP) to the 5-hydroxyl of shikimate-3-phosphate (S3P) to produce enolpyruvyl shikimate-3-phosphate and inorganic phosphate. The protein is 3-phosphoshikimate 1-carboxyvinyltransferase of Agrobacterium sp. (strain CP4).